The primary structure comprises 198 residues: Recombination protein RecR (198 aa).

Residues 56 to 71 form a C4-type zinc finger; the sequence is CTECRDFSETKICAIC. The Toprim domain occupies 79–174; the sequence is HQLCVVESPP…RPSRLAQGLP (96 aa).

It belongs to the RecR family.

Its function is as follows. May play a role in DNA repair. It seems to be involved in an RecBC-independent recombinational process of DNA repair. It may act with RecF and RecO. This Xylella fastidiosa (strain Temecula1 / ATCC 700964) protein is Recombination protein RecR.